The primary structure comprises 236 residues: Phosphoribosylaminoimidazole-succinocarboxamide synthase (236 aa).

It belongs to the SAICAR synthetase family.

The enzyme catalyses 5-amino-1-(5-phospho-D-ribosyl)imidazole-4-carboxylate + L-aspartate + ATP = (2S)-2-[5-amino-1-(5-phospho-beta-D-ribosyl)imidazole-4-carboxamido]succinate + ADP + phosphate + 2 H(+). It functions in the pathway purine metabolism; IMP biosynthesis via de novo pathway; 5-amino-1-(5-phospho-D-ribosyl)imidazole-4-carboxamide from 5-amino-1-(5-phospho-D-ribosyl)imidazole-4-carboxylate: step 1/2. The sequence is that of Phosphoribosylaminoimidazole-succinocarboxamide synthase from Pseudomonas syringae pv. syringae (strain B728a).